We begin with the raw amino-acid sequence, 98 residues long: Acylphosphatase (98 aa).

The Acylphosphatase-like domain maps to 12 to 98 (TYYVRVRGVV…ERRFDRFQQQ (87 aa)). Residues R27 and N45 contribute to the active site.

Belongs to the acylphosphatase family.

The enzyme catalyses an acyl phosphate + H2O = a carboxylate + phosphate + H(+). This Burkholderia ambifaria (strain ATCC BAA-244 / DSM 16087 / CCUG 44356 / LMG 19182 / AMMD) (Burkholderia cepacia (strain AMMD)) protein is Acylphosphatase (acyP).